A 518-amino-acid polypeptide reads, in one-letter code: 4-trimethylaminobutyraldehyde dehydrogenase B (518 aa).

NAD(+)-binding positions include Lys204 and 256–260 (GSVPT). Glu278 serves as the catalytic Proton acceptor. The active-site Nucleophile is Cys312. Glu415 lines the NAD(+) pocket.

This sequence belongs to the aldehyde dehydrogenase family. As to quaternary structure, homotetramer.

Its subcellular location is the cytoplasm. It localises to the cytosol. The enzyme catalyses 4-(trimethylamino)butanal + NAD(+) + H2O = 4-(trimethylamino)butanoate + NADH + 2 H(+). The catalysed reaction is an aldehyde + NAD(+) + H2O = a carboxylate + NADH + 2 H(+). It functions in the pathway amine and polyamine biosynthesis; carnitine biosynthesis. Functionally, converts gamma-trimethylaminobutyraldehyde into gamma-butyrobetaine with high efficiency (in vitro). Can catalyze the irreversible oxidation of a broad range of aldehydes to the corresponding acids in an NAD-dependent reaction, but with low efficiency. This is 4-trimethylaminobutyraldehyde dehydrogenase B (aldh9a1b) from Danio rerio (Zebrafish).